Reading from the N-terminus, the 1000-residue chain is Chloride channel protein D (1000 aa).

Composition is skewed to low complexity over residues 1–16 and 38–60; these read MSSG…NDGN and NNNN…NSSV. Residues 1–90 are disordered; sequence MSSGNPFDNG…SYDDDGDDEE (90 aa). At 1 to 256 the chain is on the cytoplasmic side; the sequence is MSSGNPFDNG…LASDHEVLRW (256 aa). Residues 71–80 show a composition bias toward basic and acidic residues; that stretch reads RIQEEERLTE. The next 10 helical transmembrane spans lie at 257–277, 290–310, 416–436, 442–462, 493–513, 534–554, 678–698, 710–730, 733–753, and 772–792; these read IVSL…HACV, AVLE…NTLL, GAGA…LFSL, FWSI…TYTM, IIPF…FTWI, LEVF…PLFF, LGLW…AYTA, MLVI…HILG, VSID…GGVS, and YLLP…ALIH. 2 CBS domains span residues 824 to 881 and 926 to 984; these read MAKK…ISDV and MNLT…YREL.

It belongs to the chloride channel (TC 2.A.49) family.

Its subcellular location is the membrane. Functionally, voltage-gated chloride channel. Chloride channels may have several functions including the regulation of cell volume, membrane potential stabilization and signal transduction. Required for normal aggregation. The protein is Chloride channel protein D (clcD) of Dictyostelium discoideum (Social amoeba).